The sequence spans 968 residues: MPFTLGQRWISDTESELGLGTVVAVDARTVTLLFPSTGENRLYARSDSPVTRVMFNPGDTITSHDGWQMQVEEVKEENGLLTYIGTRRDTEESGVALREVFLDSKLVFSKPQDRLFAGQIDRMDRFALRYRARKYSSEQFRMPYSGLRGQRTSLIPHQLNIAHDVGRRHAPRVLLADEVGLGKTIEAGMILHQQLLSGAAERVLIIVPETLQHQWLVEMLRRFNLRFALFDDERYAEAQHDAYNPFDTEQLVICSPDFVRRSKQRLEHLCEAEWDLLVVDEAHHLVWSEDAPSREYQAIEQLAEHVPGVLLLTATPEQLGMESHFARLRLLDPNRFHDFAQFVEEQKNYRPVADAVAMLLAGNKLSNDELNMLGEMIGEQDIEPLLQAANSDSEDAQSARQELVSMLMDRHGTSRVLFRNTRNGVKGFPKRELHTIKLPLPTQYQTAIKVSGIMGARKSAEDRARDMLYPERIYQEFEGDNATWWNFDPRVEWLMGYLTSHRSQKVLVICAKAATALQLEQVLREREGIRAAVFHEGMSIIERDRAAAWFAEEDTGAQVLLCSEIGSEGRNFQFASHMVMFDLPFNPDLLEQRIGRLDRIGQAHDIQIHVPYLEKTAQSVLVRWYHEGLDAFEHTCPTGRTIYDSVYNDLINYLASPDQTEGFDDLIKNCREQHEALKAQLEQGRDRLLEIHSNGGEKAQALAESIEEQDDDTNLIAFAMNLFDIIGINQDDRGDNMIVLTPSDHMLVPDFPGLSEDGITITFDREVALAREDAQFITWEHPLIRNGLDLILSGDTGSSTISLLKNKALPVGTLLVELIYVVEAQAPKQLQLNRFLPPTPVRMLLDKNGNNLAALVEFETFNRQLNAVNRHTGSKLVNAVQQDVHAILQLGEAQIEKSARALIDAARNEADEKLSAELSRLEALRAVNPNIRDDELTAIESNRQQVMESLDQAGWRLDALRLIVVTHQ.

Residues 164–334 (DVGRRHAPRV…FARLRLLDPN (171 aa)) enclose the Helicase ATP-binding domain. An ATP-binding site is contributed by 177 to 184 (DEVGLGKT). Positions 280 to 283 (DEAH) match the DEAH box motif. Residues 490–662 (RVEWLMGYLT…YLASPDQTEG (173 aa)) form the Helicase C-terminal domain.

Belongs to the SNF2/RAD54 helicase family. RapA subfamily. As to quaternary structure, interacts with the RNAP. Has a higher affinity for the core RNAP than for the holoenzyme. Its ATPase activity is stimulated by binding to RNAP.

Its function is as follows. Transcription regulator that activates transcription by stimulating RNA polymerase (RNAP) recycling in case of stress conditions such as supercoiled DNA or high salt concentrations. Probably acts by releasing the RNAP, when it is trapped or immobilized on tightly supercoiled DNA. Does not activate transcription on linear DNA. Probably not involved in DNA repair. The chain is RNA polymerase-associated protein RapA from Shigella dysenteriae serotype 1 (strain Sd197).